A 617-amino-acid polypeptide reads, in one-letter code: Glutamyl-tRNA(Gln) amidotransferase subunit E (617 aa).

It belongs to the GatB/GatE family. GatE subfamily. Heterodimer of GatD and GatE.

The enzyme catalyses L-glutamyl-tRNA(Gln) + L-glutamine + ATP + H2O = L-glutaminyl-tRNA(Gln) + L-glutamate + ADP + phosphate + H(+). Functionally, allows the formation of correctly charged Gln-tRNA(Gln) through the transamidation of misacylated Glu-tRNA(Gln) in organisms which lack glutaminyl-tRNA synthetase. The reaction takes place in the presence of glutamine and ATP through an activated gamma-phospho-Glu-tRNA(Gln). The GatDE system is specific for glutamate and does not act on aspartate. The polypeptide is Glutamyl-tRNA(Gln) amidotransferase subunit E (Natronomonas pharaonis (strain ATCC 35678 / DSM 2160 / CIP 103997 / JCM 8858 / NBRC 14720 / NCIMB 2260 / Gabara) (Halobacterium pharaonis)).